The following is a 690-amino-acid chain: Protein arginine N-methyltransferase 7 (690 aa).

2 SAM-dependent MTase PRMT-type domains span residues 14 to 357 (QNSW…YSLW) and 366 to 690 (TKSV…QKKL).

It belongs to the class I-like SAM-binding methyltransferase superfamily. Protein arginine N-methyltransferase family. PRMT7 subfamily.

Its function is as follows. Essential arginine methyltransferase that can both catalyze the formation of omega-N monomethylarginine (MMA) and symmetrical dimethylarginine (sDMA). Specifically mediates the symmetrical dimethylation of arginine residues in the small nuclear ribonucleoproteins SmD1 and SmD3. This Drosophila erecta (Fruit fly) protein is Protein arginine N-methyltransferase 7 (Art7).